Here is a 148-residue protein sequence, read N- to C-terminus: Small ribosomal subunit protein uS12 (148 aa).

The protein belongs to the universal ribosomal protein uS12 family. As to quaternary structure, part of the 30S ribosomal subunit.

In terms of biological role, with S4 and S5 plays an important role in translational accuracy. Located at the interface of the 30S and 50S subunits. The chain is Small ribosomal subunit protein uS12 from Methanocaldococcus jannaschii (strain ATCC 43067 / DSM 2661 / JAL-1 / JCM 10045 / NBRC 100440) (Methanococcus jannaschii).